A 359-amino-acid chain; its full sequence is Histidinol-phosphate aminotransferase (359 aa).

An N6-(pyridoxal phosphate)lysine modification is found at Lys217.

This sequence belongs to the class-II pyridoxal-phosphate-dependent aminotransferase family. Histidinol-phosphate aminotransferase subfamily. As to quaternary structure, homodimer. The cofactor is pyridoxal 5'-phosphate.

The catalysed reaction is L-histidinol phosphate + 2-oxoglutarate = 3-(imidazol-4-yl)-2-oxopropyl phosphate + L-glutamate. It participates in amino-acid biosynthesis; L-histidine biosynthesis; L-histidine from 5-phospho-alpha-D-ribose 1-diphosphate: step 7/9. This is Histidinol-phosphate aminotransferase from Salmonella arizonae (strain ATCC BAA-731 / CDC346-86 / RSK2980).